The primary structure comprises 433 residues: MRINVESLSSIKKKINFEIPSERVASEVEKAYGEIRKHAAIKGFRKGKVPKDLLVKHFSDKMADDVLKNIINDTYFKALMDENIYPVSHPVIESDELKVGESFKYSATVEIFPDVVVKDYTGLEVKKEKYVFNEEVIANRLKEMQENMSHLEPADAQHSAMNGDFVTFDFKGFVGGEPFDGGAAEDYQLELGSGRFIPGFEDQIVGMKVGDEGEIKVTFPENYGQKDLAGKEATFAVTIKEIKVKELPELNDDFAKDFGEFESLDQLKAKISEVYALQENERIETELRERLIKALIDKNNFEVPETLIDKQLNLMLENSKKRLAMQRLTMEMMGLNDEGYKIQFRSVAETQVKGSLLLEALARQESIQVADDDLDAKIKEIAAQNNQELETVNNFYQQNAQAKENLTAQLKEDKVVDFLLAKAKIDEVDRSEI.

Positions 163-248 constitute a PPIase FKBP-type domain; that stretch reads GDFVTFDFKG…IKEIKVKELP (86 aa).

Belongs to the FKBP-type PPIase family. Tig subfamily.

Its subcellular location is the cytoplasm. The enzyme catalyses [protein]-peptidylproline (omega=180) = [protein]-peptidylproline (omega=0). Involved in protein export. Acts as a chaperone by maintaining the newly synthesized protein in an open conformation. Functions as a peptidyl-prolyl cis-trans isomerase. The protein is Trigger factor of Geotalea uraniireducens (strain Rf4) (Geobacter uraniireducens).